A 148-amino-acid chain; its full sequence is MDVIIENRKVRFNYFIIQEFDAGIVLIGSEVKSLRQRKVSIAEAYVTEKNMELWLCNLHISEYNHASTKNHNPTRPRKLLLRKKQIYKISGNIKNDGFTVVPLSLYFNEKGLAKAKIVIVKGKKLHDKRETIKTRDWNREKSRVLRGN.

This sequence belongs to the SmpB family.

It localises to the cytoplasm. Functionally, required for rescue of stalled ribosomes mediated by trans-translation. Binds to transfer-messenger RNA (tmRNA), required for stable association of tmRNA with ribosomes. tmRNA and SmpB together mimic tRNA shape, replacing the anticodon stem-loop with SmpB. tmRNA is encoded by the ssrA gene; the 2 termini fold to resemble tRNA(Ala) and it encodes a 'tag peptide', a short internal open reading frame. During trans-translation Ala-aminoacylated tmRNA acts like a tRNA, entering the A-site of stalled ribosomes, displacing the stalled mRNA. The ribosome then switches to translate the ORF on the tmRNA; the nascent peptide is terminated with the 'tag peptide' encoded by the tmRNA and targeted for degradation. The ribosome is freed to recommence translation, which seems to be the essential function of trans-translation. The chain is SsrA-binding protein from Ehrlichia canis (strain Jake).